We begin with the raw amino-acid sequence, 509 residues long: MSEQNPTQAAKQAPQQELNDIMAQRLAKLDAMREKGQAFPNDFRRENISDDLHARYDDKTKEELEELAVEVSIAGRMMMRRIMGKASFATIQDMGGRIQLYVTRDKLPESFYNTEFKKWDLGDIIGAKGVLFKTQTNELSIKVSEIRILTKALRPLPDKFHGLSDTEACYRQRYLDLIANDNSRKTFLLRNKIVNAIRQYLNDRDFMEVETPMLQSIPGGAAAKPFETYHNALSLPMYLRIAPELNLKRLVVGGFERVFEINRSFRNEGVSTRHNPEFTMIEFYQAYADYIDLMNLTEEMLRSIAENVLGSSIVNYGDQVFDFGAAFIRMTMKESVLQYNEGIEASELESMASLKALAARFNVNIKENWGEGKVLTEIFEETTEHKLLQPTFITAYPAEVSPLARRNDQDPSVTDRFEFFVGGRELANGFSELNDSQDQAERFMDQVAQKESGDDEAMFYDADYITALEHGLPPTAGEGIGIDRLVMLFTDSHTIRDVLLFPHMRPQAK.

The span at methionine 1–leucine 18 shows a compositional bias: polar residues. Residues methionine 1 to aspartate 20 are disordered. 2 residues coordinate Mg(2+): glutamate 418 and glutamate 425.

This sequence belongs to the class-II aminoacyl-tRNA synthetase family. Homodimer. The cofactor is Mg(2+).

The protein localises to the cytoplasm. It carries out the reaction tRNA(Lys) + L-lysine + ATP = L-lysyl-tRNA(Lys) + AMP + diphosphate. The polypeptide is Lysine--tRNA ligase (Psychromonas ingrahamii (strain DSM 17664 / CCUG 51855 / 37)).